We begin with the raw amino-acid sequence, 232 residues long: Protein DOG1-like 4 (232 aa).

The 221-residue stretch at 9 to 229 (EEKFLEFYES…RRWGNRRHYV (221 aa)) folds into the DOG1 domain.

The sequence is that of Protein DOG1-like 4 from Arabidopsis thaliana (Mouse-ear cress).